The following is a 1806-amino-acid chain: Focadhesin (1806 aa).

Residues 733 to 760 form a disordered region; it reads ARPIPKQPEVEDEVKQNEEENEEEEDIS.

Its subcellular location is the cell junction. The protein resides in the focal adhesion. It localises to the cytoplasm. The protein localises to the cytosol. Functionally, required for the maintenance of SKIC2 and SKIC3 proteostatic levels in the liver. May be involved in the regulation of RNA degradation by the exosome complex. The protein is Focadhesin (focad) of Danio rerio (Zebrafish).